The chain runs to 223 residues: Small ribosomal subunit protein uS3 (223 aa).

The KH type-2 domain occupies 39 to 107 (VREFLHKKLA…PVQINIEEVR (69 aa)).

The protein belongs to the universal ribosomal protein uS3 family. Part of the 30S ribosomal subunit. Forms a tight complex with proteins S10 and S14.

In terms of biological role, binds the lower part of the 30S subunit head. Binds mRNA in the 70S ribosome, positioning it for translation. The chain is Small ribosomal subunit protein uS3 from Francisella tularensis subsp. novicida (strain U112).